The primary structure comprises 206 residues: ATP synthase subunit b (206 aa).

Residues 10–30 (LLKPFVSTAAICLLVAGTVVL) form a helical membrane-spanning segment.

It belongs to the ATPase B chain family. In terms of assembly, F-type ATPases have 2 components, F(1) - the catalytic core - and F(0) - the membrane proton channel. F(1) has five subunits: alpha(3), beta(3), gamma(1), delta(1), epsilon(1). F(0) has three main subunits: a(1), b(2) and c(10-14). The alpha and beta chains form an alternating ring which encloses part of the gamma chain. F(1) is attached to F(0) by a central stalk formed by the gamma and epsilon chains, while a peripheral stalk is formed by the delta and b chains.

It is found in the cell inner membrane. Functionally, f(1)F(0) ATP synthase produces ATP from ADP in the presence of a proton or sodium gradient. F-type ATPases consist of two structural domains, F(1) containing the extramembraneous catalytic core and F(0) containing the membrane proton channel, linked together by a central stalk and a peripheral stalk. During catalysis, ATP synthesis in the catalytic domain of F(1) is coupled via a rotary mechanism of the central stalk subunits to proton translocation. Its function is as follows. Component of the F(0) channel, it forms part of the peripheral stalk, linking F(1) to F(0). The protein is ATP synthase subunit b of Geobacter sulfurreducens (strain ATCC 51573 / DSM 12127 / PCA).